The chain runs to 274 residues: MVPNPPISLAQGDDLIIGGRRFHSRLFTGTGKYPSMEVMQQSIKRSACEMVTVAVRRVQAVAAGHAGLMEAIDWTRIWMLPNTAGCTNAEEAVRVARLGRELAKLAGQEDNTFVKLEVIPDGRHLLPDPIGTLQAAEQLVNEGFTVLPYINADPLLAKHLEDAGCATVMPLGSPIGSGQGLNNAANIALIIENASVPVVVDAGIGVPSEAAQALEMGADAVLVNSAIALARNPAAMAEAMGQAVIAGRTAFCAGRLPRREEASASSPTTGLVSS.

K115 acts as the Schiff-base intermediate with DXP in catalysis. Residues G176, 202–203 (AG), and 224–225 (NS) each bind 1-deoxy-D-xylulose 5-phosphate.

It belongs to the ThiG family. Homotetramer. Forms heterodimers with either ThiH or ThiS.

It is found in the cytoplasm. It catalyses the reaction [ThiS sulfur-carrier protein]-C-terminal-Gly-aminoethanethioate + 2-iminoacetate + 1-deoxy-D-xylulose 5-phosphate = [ThiS sulfur-carrier protein]-C-terminal Gly-Gly + 2-[(2R,5Z)-2-carboxy-4-methylthiazol-5(2H)-ylidene]ethyl phosphate + 2 H2O + H(+). It functions in the pathway cofactor biosynthesis; thiamine diphosphate biosynthesis. Functionally, catalyzes the rearrangement of 1-deoxy-D-xylulose 5-phosphate (DXP) to produce the thiazole phosphate moiety of thiamine. Sulfur is provided by the thiocarboxylate moiety of the carrier protein ThiS. In vitro, sulfur can be provided by H(2)S. The polypeptide is Thiazole synthase (Parasynechococcus marenigrum (strain WH8102)).